We begin with the raw amino-acid sequence, 634 residues long: tRNA uridine 5-carboxymethylaminomethyl modification enzyme MnmG (634 aa).

14–19 contributes to the FAD binding site; the sequence is GGGHAG. 279–293 serves as a coordination point for NAD(+); sequence GPRYCPSIEDKVVRF.

The protein belongs to the MnmG family. As to quaternary structure, homodimer. Heterotetramer of two MnmE and two MnmG subunits. It depends on FAD as a cofactor.

The protein localises to the cytoplasm. Functionally, NAD-binding protein involved in the addition of a carboxymethylaminomethyl (cmnm) group at the wobble position (U34) of certain tRNAs, forming tRNA-cmnm(5)s(2)U34. The protein is tRNA uridine 5-carboxymethylaminomethyl modification enzyme MnmG of Xanthomonas campestris pv. campestris (strain B100).